Consider the following 766-residue polypeptide: Protein sak1 (766 aa).

The segment at residues 101 to 176 (GICWLKRACE…YHYCGIKLRG (76 aa)) is a DNA-binding region (RFX-type winged-helix). Phosphoserine occurs at positions 223, 224, and 227. Disordered stretches follow at residues 271–308 (PQAHPLPSHLSQSNVPPQLSHSSVPSPAPPRSVSQPTY) and 708–731 (LQEHRQSQQHFQQDIEALQSQQQQ). Polar residues predominate over residues 279-289 (HLSQSNVPPQL). Low complexity-rich tracts occupy residues 290-308 (SHSSVPSPAPPRSVSQPTY) and 715-731 (QQHFQQDIEALQSQQQQ).

The protein belongs to the RFX family.

Its subcellular location is the nucleus. Positively regulates cyclic AMP-dependent protein kinase-mediated exit from the mitotic cell cycle. In Schizosaccharomyces pombe (strain 972 / ATCC 24843) (Fission yeast), this protein is Protein sak1 (sak1).